Here is a 285-residue protein sequence, read N- to C-terminus: Bifunctional protein FolD (285 aa).

Residues 165-167 and S190 each bind NADP(+); that span reads GRS.

Belongs to the tetrahydrofolate dehydrogenase/cyclohydrolase family. Homodimer.

It carries out the reaction (6R)-5,10-methylene-5,6,7,8-tetrahydrofolate + NADP(+) = (6R)-5,10-methenyltetrahydrofolate + NADPH. It catalyses the reaction (6R)-5,10-methenyltetrahydrofolate + H2O = (6R)-10-formyltetrahydrofolate + H(+). Its pathway is one-carbon metabolism; tetrahydrofolate interconversion. Catalyzes the oxidation of 5,10-methylenetetrahydrofolate to 5,10-methenyltetrahydrofolate and then the hydrolysis of 5,10-methenyltetrahydrofolate to 10-formyltetrahydrofolate. The protein is Bifunctional protein FolD of Burkholderia cenocepacia (strain HI2424).